The chain runs to 402 residues: C2H2 finger domain transcription factor CON7 (402 aa).

Residues Met-1–Arg-247 are disordered. Composition is skewed to polar residues over residues Leu-19–Gly-49 and Cys-72–Thr-86. Over residues Ser-87–Gln-98 the composition is skewed to low complexity. 2 stretches are compositionally biased toward polar residues: residues Glu-99–Ser-116 and Ala-125–Asp-151. Residues Tyr-256–His-282 form a C2H2-type zinc finger. Residues Glu-289–Gln-323 adopt a coiled-coil conformation. The span at Lys-302–Arg-317 shows a compositional bias: basic and acidic residues. The tract at residues Lys-302–Arg-402 is disordered. 3 stretches are compositionally biased toward polar residues: residues Ser-322–Gly-341, Ala-363–Pro-373, and Gly-392–Arg-402.

The protein resides in the nucleus. Functionally, transcription factor that plays a central role in appressorium formation and pathogenicity. Required for the expression of a large set of genes including factors that might play a role in membrane metabolism and ergosterol biosynthesis, the chitin-binding protein CBP1,as well as CHS7 that is essential for normal pathogenic development. The polypeptide is C2H2 finger domain transcription factor CON7 (Pyricularia oryzae (strain 70-15 / ATCC MYA-4617 / FGSC 8958) (Rice blast fungus)).